We begin with the raw amino-acid sequence, 130 residues long: Small ribosomal subunit protein uS9 (130 aa).

The protein belongs to the universal ribosomal protein uS9 family.

The polypeptide is Small ribosomal subunit protein uS9 (Verminephrobacter eiseniae (strain EF01-2)).